A 479-amino-acid chain; its full sequence is POU domain, class 2, transcription factor 2 (479 aa).

5 disordered regions span residues Met1–His86, Thr166–Leu200, Ser275–Arg298, Pro357–Ser393, and Thr409–Pro479. Over residues Arg12–Gly37 the composition is skewed to basic and acidic residues. The segment covering Pro38–Ser60 has biased composition (polar residues). Over residues Ala76–Pro85 the composition is skewed to pro residues. Residues Glu195–Glu269 form the POU-specific domain. Residues Ser275–Leu288 show a composition bias toward low complexity. The segment at residues Arg297–Asn356 is a DNA-binding region (homeobox). Residues Leu389–Leu410 are leucine-zipper. The span at Ala416–Ala425 shows a compositional bias: gly residues.

The protein belongs to the POU transcription factor family. Class-2 subfamily. In terms of assembly, interacts with NR3C1, AR and PGR. Interacts with POU2AF1; the interaction increases POU2F2 transactivation activity. In terms of tissue distribution, isoform 3 is B-cell specific. Isoform 5 is expressed in B-cells and the immunoglobulin-expressing T-cell line MOLT-4, but not in the T-cell line BW5147.

The protein localises to the cytoplasm. The protein resides in the nucleus. Its activity is regulated as follows. Transactivation activity is enhanced by transcriptional coactivator POU2AF1. In terms of biological role, transcription factor that specifically binds to the octamer motif (5'-ATTTGCAT-3'). Regulates IL6 expression in B cells with POU2AF1. Regulates transcription in a number of tissues in addition to activating immunoglobulin gene expression. Modulates transcription transactivation by NR3C1, AR and PGR. Functionally, activates the U2 small nuclear RNA (snRNA) promoter. In Homo sapiens (Human), this protein is POU domain, class 2, transcription factor 2.